The chain runs to 287 residues: mRNA-capping enzyme small subunit (287 aa).

In terms of assembly, heterodimer of a large and a small subunit.

Its subcellular location is the virion. The catalysed reaction is a 5'-end (5'-triphosphoguanosine)-ribonucleoside in mRNA + S-adenosyl-L-methionine = a 5'-end (N(7)-methyl 5'-triphosphoguanosine)-ribonucleoside in mRNA + S-adenosyl-L-homocysteine. Catalyzes the last reaction in the mRNA cap formation pathway. The chain is mRNA-capping enzyme small subunit from Erythrocebus patas (Red guenon).